Consider the following 236-residue polypeptide: CHD1 helical C-terminal domain containing protein 1 (236 aa).

The interval 44–145 (LDQDTFKTCK…SSQPAKFLVT (102 aa)) is CHD1 helical C-terminal domain (CHCT). Residues 184 to 236 (LSNMQTPGQGSPLPGQPRSQDHVKKDSLRELSQKPKLKRKRIKEAPETPETEP) form a disordered region. The segment covering 202–216 (SQDHVKKDSLRELSQ) has biased composition (basic and acidic residues).

It is found in the cytoplasm. The protein resides in the nucleus. In terms of biological role, may play a role in regulation of apoptosis. The protein is CHD1 helical C-terminal domain containing protein 1 of Homo sapiens (Human).